A 309-amino-acid polypeptide reads, in one-letter code: Probable sugar phosphate/phosphate translocator At5g05820 (309 aa).

10 helical membrane-spanning segments follow: residues 9–29, 42–62, 77–97, 100–120, 130–150, 154–174, 192–212, 229–249, 256–278, and 282–301; these read FFTI…LLLN, IFLT…AIAW, FFKI…GNIS, FLPV…TAVF, AWLT…ASGG, FHLF…LKSV, LLLY…LIME, IVWY…TNFL, ALTL…ILIF, and VSVT…ILYS. One can recognise an EamA domain in the interval 30–147; the sequence is KYLLSNYGFK…VPVVTGVVIA (118 aa).

This sequence belongs to the TPT transporter family. TPT (TC 2.A.7.9) subfamily.

The protein resides in the membrane. The sequence is that of Probable sugar phosphate/phosphate translocator At5g05820 from Arabidopsis thaliana (Mouse-ear cress).